The chain runs to 192 residues: Signal peptidase complex catalytic subunit SEC11C (192 aa).

The Cytoplasmic segment spans residues 1 to 28 (MVRAGAVGTHLPTSSLDIFGDLRKMNKR). A helical; Signal-anchor for type II membrane protein transmembrane segment spans residues 29–48 (QLYYQVLNFAMIVSSALMIW). Residues 49–192 (KGLIVLTGSE…GAYVLLKRES (144 aa)) lie on the Lumenal side of the membrane. Residues serine 68, histidine 108, and aspartate 134 each act as charge relay system in the active site. Residues 177–188 (ALVAVMGAYVLL) form a C-terminal short (CTS) helix region.

Belongs to the peptidase S26B family. In terms of assembly, component of the signal peptidase complex paralog C (SPC-C) composed of a catalytic subunit SEC11C and three accessory subunits SPCS1, SPCS2 and SPCS3. Within the complex, interacts with SPCS2 and SPCS3. The complex induces a local thinning of the ER membrane which is used to measure the length of the signal peptide (SP) h-region of protein substrates. This ensures the selectivity of the complex towards h-regions shorter than 18-20 amino acids. May undergo processing at the N-terminus.

The protein localises to the endoplasmic reticulum membrane. It carries out the reaction Cleavage of hydrophobic, N-terminal signal or leader sequences from secreted and periplasmic proteins.. In terms of biological role, catalytic component of the signal peptidase complex (SPC) which catalyzes the cleavage of N-terminal signal sequences from nascent proteins as they are translocated into the lumen of the endoplasmic reticulum. Specifically cleaves N-terminal signal peptides that contain a hydrophobic alpha-helix (h-region) shorter than 18-20 amino acids. This is Signal peptidase complex catalytic subunit SEC11C (Sec11c) from Rattus norvegicus (Rat).